We begin with the raw amino-acid sequence, 608 residues long: Isoprene synthase, chloroplastic (608 aa).

A chloroplast-targeting transit peptide spans 1–45; the sequence is MATNLLCLSNKLSSPTPTPSTRFPQSKNFITQKTSLANPKPWRVI. A dimethylallyl diphosphate-binding site is contributed by aspartate 350. The Mg(2+) site is built by aspartate 350 and aspartate 354. The short motif at 350–354 is the DDXXD motif element; it reads DDVYD. Dimethylallyl diphosphate-binding residues include glutamate 428, arginine 494, and asparagine 497. Mg(2+) contacts are provided by asparagine 497, threonine 501, and glutamate 505.

Belongs to the terpene synthase family. Tpsb subfamily. It depends on Mg(2+) as a cofactor. Mn(2+) serves as cofactor.

It localises to the plastid. The protein localises to the chloroplast. It catalyses the reaction dimethylallyl diphosphate = isoprene + diphosphate. Lyase that catalyzes the formation of isoprene from dimethylallyl diphosphate. The chain is Isoprene synthase, chloroplastic (ISPS) from Pueraria montana var. lobata (Kudzu vine).